Reading from the N-terminus, the 294-residue chain is 4-hydroxy-tetrahydrodipicolinate synthase (294 aa).

A pyruvate-binding site is contributed by Thr44. The Proton donor/acceptor role is filled by Tyr132. The active-site Schiff-base intermediate with substrate is Lys160. Val202 contributes to the pyruvate binding site.

It belongs to the DapA family. As to quaternary structure, homotetramer; dimer of dimers.

The protein resides in the cytoplasm. The enzyme catalyses L-aspartate 4-semialdehyde + pyruvate = (2S,4S)-4-hydroxy-2,3,4,5-tetrahydrodipicolinate + H2O + H(+). It participates in amino-acid biosynthesis; L-lysine biosynthesis via DAP pathway; (S)-tetrahydrodipicolinate from L-aspartate: step 3/4. Its function is as follows. Catalyzes the condensation of (S)-aspartate-beta-semialdehyde [(S)-ASA] and pyruvate to 4-hydroxy-tetrahydrodipicolinate (HTPA). The polypeptide is 4-hydroxy-tetrahydrodipicolinate synthase (Leptospira biflexa serovar Patoc (strain Patoc 1 / Ames)).